Here is an 886-residue protein sequence, read N- to C-terminus: Putative leucine-rich repeat receptor-like serine/threonine-protein kinase At2g14440 (886 aa).

The signal sequence occupies residues 1 to 23; it reads METRSKLMLLACATFSIISLVKS. Residues 24–528 are Extracellular-facing; the sequence is QNQQGFISLY…KHQPKSWLVA (505 aa). 10 N-linked (GlcNAc...) asparagine glycosylation sites follow: Asn49, Asn69, Asn232, Asn236, Asn259, Asn292, Asn434, Asn447, Asn458, and Asn471. 4 LRR repeats span residues 413–436, 437–460, 461–483, and 485–507; these read RIIS…QNLT, MLRE…QNLT, MLRE…LATI, and PLLV…LQDR. Residues 529 to 549 form a helical membrane-spanning segment; the sequence is IVASISCVAVTIIVLVLIFIF. Residues 550–886 lie on the Cytoplasmic side of the membrane; it reads RRRKSSTRKV…TFISDIPSAR (337 aa). Positions 581–850 constitute a Protein kinase domain; that stretch reads NNFEVVLGKG…NMTRVAHELN (270 aa). ATP is bound by residues 587–595 and Lys608; that span reads LGKGGFGVV. The residue at position 653 (Tyr653) is a Phosphotyrosine. Asp705 acts as the Proton acceptor in catalysis. At Ser739 the chain carries Phosphoserine. 2 positions are modified to phosphothreonine: Thr740 and Thr745. Position 753 is a phosphotyrosine (Tyr753). The disordered stretch occupies residues 863–886; that stretch reads SQDQNSSKSSGHTVTFISDIPSAR. Positions 865–878 are enriched in polar residues; sequence DQNSSKSSGHTVTF.

The protein belongs to the protein kinase superfamily. Ser/Thr protein kinase family.

It is found in the cell membrane. It carries out the reaction L-seryl-[protein] + ATP = O-phospho-L-seryl-[protein] + ADP + H(+). The catalysed reaction is L-threonyl-[protein] + ATP = O-phospho-L-threonyl-[protein] + ADP + H(+). In Arabidopsis thaliana (Mouse-ear cress), this protein is Putative leucine-rich repeat receptor-like serine/threonine-protein kinase At2g14440.